The following is a 204-amino-acid chain: uncharacterized protein (204 aa).

The signal sequence occupies residues Met-1–Ala-24.

This is an uncharacterized protein from Pasteurella multocida (strain Pm70).